We begin with the raw amino-acid sequence, 503 residues long: Maturase K (503 aa).

Belongs to the intron maturase 2 family. MatK subfamily.

It localises to the plastid. Its subcellular location is the chloroplast. Its function is as follows. Usually encoded in the trnK tRNA gene intron. Probably assists in splicing its own and other chloroplast group II introns. The polypeptide is Maturase K (Syzygium australe (Brush cherry)).